The sequence spans 229 residues: Cytidylate kinase (229 aa).

12–20 lines the ATP pocket; it reads GPSGSGKGT.

Belongs to the cytidylate kinase family. Type 1 subfamily.

Its subcellular location is the cytoplasm. The catalysed reaction is CMP + ATP = CDP + ADP. The enzyme catalyses dCMP + ATP = dCDP + ADP. This chain is Cytidylate kinase, found in Pseudomonas syringae pv. tomato (strain ATCC BAA-871 / DC3000).